The chain runs to 25 residues: Metallothionein (25 aa).

7 residues coordinate Cu(+): cysteine 3, cysteine 5, cysteine 11, cysteine 13, cysteine 18, cysteine 20, and cysteine 23.

It belongs to the metallothionein superfamily. Type 8 family.

Functionally, the metallothioneins are involved in the cellular sequestration of toxic metal ions. Binds six copper (cuprous) ions. The polypeptide is Metallothionein (Agaricus bisporus (White button mushroom)).